We begin with the raw amino-acid sequence, 2358 residues long: Cell wall alpha-1,3-glucan synthase mok13 (2358 aa).

Positions Glu-1645–Pro-1659 are enriched in basic and acidic residues. Residues Glu-1645–Phe-1669 form a disordered region.

This sequence belongs to the glycosyltransferase group 1 family.

The enzyme catalyses [(1-&gt;3)-alpha-D-glucosyl](n) + UDP-alpha-D-glucose = [(1-&gt;3)-alpha-D-glucosyl](n+1) + UDP + H(+). The chain is Cell wall alpha-1,3-glucan synthase mok13 (mok13) from Schizosaccharomyces pombe (strain 972 / ATCC 24843) (Fission yeast).